Here is a 455-residue protein sequence, read N- to C-terminus: Phosphomethylpyrimidine synthase (455 aa).

Substrate contacts are provided by residues Asn80, Met109, Tyr139, His175, 195–197 (SRG), 236–239 (DSLR), and Glu275. His279 provides a ligand contact to Zn(2+). A substrate-binding site is contributed by Tyr302. A Zn(2+)-binding site is contributed by His343. Residues Cys423, Cys426, and Cys431 each coordinate [4Fe-4S] cluster.

Belongs to the ThiC family. [4Fe-4S] cluster serves as cofactor.

The enzyme catalyses 5-amino-1-(5-phospho-beta-D-ribosyl)imidazole + S-adenosyl-L-methionine = 4-amino-2-methyl-5-(phosphooxymethyl)pyrimidine + CO + 5'-deoxyadenosine + formate + L-methionine + 3 H(+). It functions in the pathway cofactor biosynthesis; thiamine diphosphate biosynthesis. Catalyzes the synthesis of the hydroxymethylpyrimidine phosphate (HMP-P) moiety of thiamine from aminoimidazole ribotide (AIR) in a radical S-adenosyl-L-methionine (SAM)-dependent reaction. This chain is Phosphomethylpyrimidine synthase, found in Synechococcus sp. (strain JA-2-3B'a(2-13)) (Cyanobacteria bacterium Yellowstone B-Prime).